Consider the following 54-residue polypeptide: Relaxin (54 aa).

Q1 is modified (pyrrolidone carboxylic acid). Disulfide bonds link C13–C41, C25–C54, and C40–C45.

This sequence belongs to the insulin family. In terms of assembly, heterodimer of a B chain and an A chain linked by two disulfide bonds.

The protein resides in the secreted. In terms of biological role, the function of relaxin in an oviparous species is not yet known. This is Relaxin from Squalus acanthias (Spiny dogfish).